The primary structure comprises 374 residues: Glycerophosphodiester phosphodiesterase GDPD2 (374 aa).

One can recognise a GP-PDE domain in the interval 38-326 (FSVIGHRGIG…DFVEEIIEST (289 aa)). A disordered region spans residues 330-349 (MIRPPPSSSPLPSPSKDDDV). Over residues 332-342 (RPPPSSSPLPS) the composition is skewed to pro residues.

This sequence belongs to the glycerophosphoryl diester phosphodiesterase family. In terms of tissue distribution, expressed in roots, shoots, flowers and siliques.

The enzyme catalyses a sn-glycero-3-phosphodiester + H2O = an alcohol + sn-glycerol 3-phosphate + H(+). In Arabidopsis thaliana (Mouse-ear cress), this protein is Glycerophosphodiester phosphodiesterase GDPD2.